The following is a 218-amino-acid chain: N-(5'-phosphoribosyl)anthranilate isomerase (218 aa).

This sequence belongs to the TrpF family.

It catalyses the reaction N-(5-phospho-beta-D-ribosyl)anthranilate = 1-(2-carboxyphenylamino)-1-deoxy-D-ribulose 5-phosphate. It functions in the pathway amino-acid biosynthesis; L-tryptophan biosynthesis; L-tryptophan from chorismate: step 3/5. This is N-(5'-phosphoribosyl)anthranilate isomerase from Stenotrophomonas maltophilia (strain K279a).